We begin with the raw amino-acid sequence, 260 residues long: Universal stress protein PHOS34 (260 aa).

A chloroplast-targeting transit peptide spans 1–33 (MNPDSDYPHLPNIKIHHPSSPRHSHHHSSSTPS). The segment at 1–42 (MNPDSDYPHLPNIKIHHPSSPRHSHHHSSSTPSAATPTPTAG) is disordered. Basic residues predominate over residues 14–28 (KIHHPSSPRHSHHHS). An ATP-binding site is contributed by P18. Phosphoserine; by MAPK3 and MAPK6 is present on S20. Residues 29-41 (SSTPSAATPTPTA) are compositionally biased toward low complexity. V80 contributes to the ATP binding site. Positions 92-118 (GPLPLQTPPPPSAATDPGAQPKPSQED) are disordered. ATP-binding positions include 170 to 179 (GSRGFGAEKR) and 187 to 189 (SVS). The interval 209 to 260 (RDGPAPPGNVGATREAIVTVKSRRDDDDDDDEDHEAKIAAAASDHHEHIKDE) is disordered. S230 is subject to Phosphoserine. The span at 251–260 (SDHHEHIKDE) shows a compositional bias: basic and acidic residues.

It belongs to the universal stress protein A family. Phosphorylated by MAPK3 and MAPK6 after pathogenic elicitation (e.g. bacterial flg22, Phytophthora infestans zoospores and xylanase).

It localises to the plastid. The protein resides in the chloroplast. This is Universal stress protein PHOS34 from Arabidopsis thaliana (Mouse-ear cress).